The chain runs to 421 residues: UDP-N-acetylglucosamine 1-carboxyvinyltransferase 2 (421 aa).

A phosphoenolpyruvate-binding site is contributed by 22-23 (KN). Arg94 provides a ligand contact to UDP-N-acetyl-alpha-D-glucosamine. Cys118 (proton donor) is an active-site residue. Position 118 is a 2-(S-cysteinyl)pyruvic acid O-phosphothioketal (Cys118). Residues Asp308 and Ile330 each contribute to the UDP-N-acetyl-alpha-D-glucosamine site.

It belongs to the EPSP synthase family. MurA subfamily.

Its subcellular location is the cytoplasm. The catalysed reaction is phosphoenolpyruvate + UDP-N-acetyl-alpha-D-glucosamine = UDP-N-acetyl-3-O-(1-carboxyvinyl)-alpha-D-glucosamine + phosphate. It functions in the pathway cell wall biogenesis; peptidoglycan biosynthesis. Cell wall formation. Adds enolpyruvyl to UDP-N-acetylglucosamine. This is UDP-N-acetylglucosamine 1-carboxyvinyltransferase 2 from Lactococcus lactis subsp. lactis (strain IL1403) (Streptococcus lactis).